We begin with the raw amino-acid sequence, 197 residues long: Small ribosomal subunit protein uS4B (197 aa).

The S4 RNA-binding domain maps to 88 to 151; it reads CRLDNIAYRI…RKNDEFADNF (64 aa).

Belongs to the universal ribosomal protein uS4 family. As to quaternary structure, part of the 30S ribosomal subunit. Contacts protein S5. The interaction surface between S4 and S5 is involved in control of translational fidelity.

Its function is as follows. One of the primary rRNA binding proteins, it binds directly to 16S rRNA where it nucleates assembly of the body of the 30S subunit. With S5 and S12 plays an important role in translational accuracy. This Clostridium botulinum (strain Hall / ATCC 3502 / NCTC 13319 / Type A) protein is Small ribosomal subunit protein uS4B.